Here is a 746-residue protein sequence, read N- to C-terminus: Exocyst complex component 3-like protein (746 aa).

The segment at 1–23 (MDSAAKDEMQPALSPGPEWPEQE) is disordered. The segment at 1–370 (MDSAAKDEMQ…DVSQLEPLLT (370 aa)) is mediates interaction with EXOC2, EXOC4 and EXOC5.

Belongs to the SEC6 family. Interacts with EXOC2, EXOC4 and EXOC5; may be part of the exocyst.

The protein localises to the cytoplasmic vesicle. The protein resides in the secretory vesicle. Its function is as follows. As part of the exocyst, may play a role in regulated exocytosis of insulin granules. This chain is Exocyst complex component 3-like protein (EXOC3L1), found in Homo sapiens (Human).